The chain runs to 453 residues: Carbamoyl phosphate synthase arginine-specific small chain (453 aa).

The N-terminal 28 residues, 1 to 28 (MFARVFKAMPARASALTSVNASIPARFM), are a transit peptide targeting the mitochondrion. The Glutamine amidotransferase type-1 domain maps to 219 to 406 (HVAVIDCGVK…IDSVKKYKAS (188 aa)). Cys295 (nucleophile) is an active-site residue. Catalysis depends on residues His379 and Glu381.

It belongs to the CarA family. Heterodimer composed of 2 chains; the small (or glutamine) chain promotes the hydrolysis of glutamine to ammonia, which is used by the large (or ammonia) chain to synthesize carbamoyl phosphate.

It is found in the mitochondrion matrix. It carries out the reaction hydrogencarbonate + L-glutamine + 2 ATP + H2O = carbamoyl phosphate + L-glutamate + 2 ADP + phosphate + 2 H(+). The catalysed reaction is L-glutamine + H2O = L-glutamate + NH4(+). The protein operates within amino-acid biosynthesis; L-arginine biosynthesis; carbamoyl phosphate from bicarbonate: step 1/1. Functionally, small subunit of the arginine-specific carbamoyl phosphate synthase (CPSase). CPSase catalyzes the formation of carbamoyl phosphate from the ammonia moiety of glutamine, carbonate, and phosphate donated by ATP, the first step of the arginine biosynthetic pathway. The small subunit (glutamine amidotransferase) binds and cleaves glutamine to supply the large subunit with the substrate ammonia. In Aspergillus fumigatus (strain ATCC MYA-4609 / CBS 101355 / FGSC A1100 / Af293) (Neosartorya fumigata), this protein is Carbamoyl phosphate synthase arginine-specific small chain (cpa1).